The chain runs to 59 residues: Conotoxin Bu1.2 (59 aa).

The first 16 residues, 1–16 (MFTVFLLVVLATTVVS), serve as a signal peptide directing secretion. Positions 17-42 (FSTDDESDGSNEEPSADQAARSAMNR) are excised as a propeptide. A disordered region spans residues 18 to 43 (STDDESDGSNEEPSADQAARSAMNRP). Acidic residues predominate over residues 19-31 (TDDESDGSNEEPS). Disulfide bonds link cysteine 46-cysteine 52 and cysteine 47-cysteine 57. Glycine 58 is modified (glycine amide).

It belongs to the conotoxin A superfamily. Expressed by the venom duct.

The protein localises to the secreted. The chain is Conotoxin Bu1.2 from Conus bullatus (Bubble cone).